The sequence spans 246 residues: Serine protease 1 (246 aa).

The N-terminal stretch at 1–17 (MKTFIFLALLGAAVAFP) is a signal peptide. Residues 18–23 (VDDDDK) constitute a propeptide, activation peptide. Residues 24–244 (IVGGYTCGAN…YVSWIKQTIA (221 aa)) form the Peptidase S1 domain. 6 cysteine pairs are disulfide-bonded: Cys-30–Cys-160, Cys-48–Cys-64, Cys-132–Cys-233, Cys-139–Cys-206, Cys-171–Cys-185, and Cys-196–Cys-220. His-63 serves as the catalytic Charge relay system. Ca(2+) is bound by residues Glu-75, Asn-77, Val-80, and Glu-85. Asp-107 functions as the Charge relay system in the catalytic mechanism. Substrate is bound by residues 194-195 (DS), 197-198 (QG), and Ser-200. Residue Ser-200 is the Charge relay system of the active site.

It belongs to the peptidase S1 family. In terms of assembly, interacts with SERPINA1. Ca(2+) is required as a cofactor. Autocatalytic cleavage after Lys-23 leads to beta-trypsin by releasing a terminal hexapeptide. Subsequent cleavage after Lys-148 leads to alpha-trypsin. Further cleavage after Lys-193 yields pseudotrypsin. A cleavage may also occur after Arg-122. Post-translationally, not sulfated on tyrosine residue(s). In terms of tissue distribution, synthesized in the acinar cells of the pancreas.

The protein localises to the secreted. It is found in the extracellular space. It carries out the reaction Preferential cleavage: Arg-|-Xaa, Lys-|-Xaa.. Is inhibited by scorpion cyclotide trypsin inhibitor TopI1. This is Serine protease 1 (PRSS1) from Bos taurus (Bovine).